The sequence spans 1021 residues: Sodium/potassium-transporting ATPase subunit alpha-1 (1021 aa).

Positions 1–5 are excised as a propeptide; that stretch reads MGKGV. Positions 1 to 11 are enriched in basic and acidic residues; sequence MGKGVGRDKYE. Positions 1 to 37 are disordered; it reads MGKGVGRDKYEPAAVSEHGDKKKAKKERDMDELKKEV. Residues 6 to 85 lie on the Cytoplasmic side of the membrane; that stretch reads GRDKYEPAAV…NALTPPPTTP (80 aa). K9 carries the post-translational modification N6-acetyllysine. Position 10 is a phosphotyrosine (Y10). S16 bears the Phosphoserine; by PKC mark. K21 is subject to N6-acetyllysine. Basic and acidic residues predominate over residues 26–37; that stretch reads KERDMDELKKEV. S38 and S45 each carry phosphoserine. The interval 80 to 82 is phosphoinositide-3 kinase binding; the sequence is PPP. The chain crosses the membrane as a helical span at residues 86–106; sequence EWVKFCRQLFGGFSMLLWIGA. Residues 107 to 129 are Extracellular-facing; that stretch reads ILCFLAYGIQAATEEEPQNDNLY. A helical membrane pass occupies residues 130 to 150; it reads LGVVLSAVVIITGCFSYYQEA. Topologically, residues 151–286 are cytoplasmic; that stretch reads KSSKIMESFK…GGQTPIAAEI (136 aa). The tract at residues 214-233 is disordered; sequence SSLTGESEPQTRSPDFTNEN. S226 carries the phosphoserine modification. The residue at position 258 (Y258) is a Phosphotyrosine. Residues 287 to 306 form a helical membrane-spanning segment; it reads EHFIHIITGVAVFLGVSFFI. Topologically, residues 307–318 are extracellular; the sequence is LSLILEYTWLEA. The helical transmembrane segment at 319–336 threads the bilayer; it reads VIFLIGIIVANVPEGLLA. The Cytoplasmic portion of the chain corresponds to 337–770; it reads TVTVCLTLTA…EEGRLIFDNL (434 aa). D374 functions as the 4-aspartylphosphate intermediate in the catalytic mechanism. Phosphoserine is present on residues S450 and S482. K485 provides a ligand contact to ATP. Phosphotyrosine is present on Y540. The mediates interaction with SCN7A stretch occupies residues 594-715; the sequence is RAAVPDAVGK…QGAIVAVTGD (122 aa). K659 is subject to N6-succinyllysine. A phosphoserine mark is found at S666 and S673. The Mg(2+) site is built by D715 and D719. The chain crosses the membrane as a helical span at residues 771–790; sequence KKSIAYTLTSNIPEITPFLI. At 791-800 the chain is on the extracellular side; sequence FIIANIPLPL. The chain crosses the membrane as a helical span at residues 801–821; it reads GTVTILCIDLGTDMVPAISLA. At 822-841 the chain is on the cytoplasmic side; the sequence is YEQAESDIMKRQPRNPKTDK. Residues 842–864 traverse the membrane as a helical segment; that stretch reads LVNEQLISMAYGQIGMIQALGGF. The Extracellular segment spans residues 865–916; it reads FTYFVILAENGFLPIHLLGLRVNWDDRWINDVEDSYGQQWTYEQRKIVEFTC. The helical transmembrane segment at 917–936 threads the bilayer; it reads HTPFFVTIVVVQWADLVICK. Topologically, residues 937–949 are cytoplasmic; it reads TRRNSVFQQGMKN. S941 carries the phosphoserine; by PKA modification. Residues 950–968 form a helical membrane-spanning segment; sequence KILIFGLFEETALAAFLSY. Residues 969–983 are Extracellular-facing; sequence CPGMGVALRMYPLKP. The chain crosses the membrane as a helical span at residues 984-1004; it reads TWWFCAFPYSLLIFVYDEVRK. The Cytoplasmic portion of the chain corresponds to 1005–1021; sequence LIIRRRPGGWVEKETYY.

The protein belongs to the cation transport ATPase (P-type) (TC 3.A.3) family. Type IIC subfamily. As to quaternary structure, the sodium/potassium-transporting ATPase is composed of a catalytic alpha subunit, an auxiliary non-catalytic beta subunit and an additional regulatory subunit. Interacts with regulatory subunit FXYD1. Interacts with regulatory subunit FXYD3. Interacts with SIK1. Interacts with SLC35G1 and STIM1. Interacts with CLN3; this interaction regulates the sodium/potassium-transporting ATPase complex localization at the plasma membrane. Interacts with SCN7A; activates ATP1A1 P-type sodium:potassium-exchanging transporter activity which indirectly signals to nearby neurons to regulate sodium homeostasis. In terms of processing, phosphorylation on Tyr-10 modulates pumping activity. Phosphorylation of Ser-941 by PKA modulates the response of ATP1A1 to PKC. Dephosphorylation by protein phosphatase 2A (PP2A) following increases in intracellular sodium, leading to increase catalytic activity.

The protein localises to the cell membrane. It is found in the basolateral cell membrane. It localises to the sarcolemma. Its subcellular location is the cell projection. The protein resides in the axon. The protein localises to the melanosome. The catalysed reaction is K(+)(out) + Na(+)(in) + ATP + H2O = K(+)(in) + Na(+)(out) + ADP + phosphate + H(+). In terms of biological role, this is the catalytic component of the active enzyme, which catalyzes the hydrolysis of ATP coupled with the exchange of sodium and potassium ions across the plasma membrane. This action creates the electrochemical gradient of sodium and potassium ions, providing the energy for active transport of various nutrients. Could also be part of an osmosensory signaling pathway that senses body-fluid sodium levels and controls salt intake behavior as well as voluntary water intake to regulate sodium homeostasis. The protein is Sodium/potassium-transporting ATPase subunit alpha-1 (ATP1A1) of Sus scrofa (Pig).